Reading from the N-terminus, the 131-residue chain is Small ribosomal subunit protein uS8 (131 aa).

The protein belongs to the universal ribosomal protein uS8 family. As to quaternary structure, part of the 30S ribosomal subunit. Contacts proteins S5 and S12.

Its function is as follows. One of the primary rRNA binding proteins, it binds directly to 16S rRNA central domain where it helps coordinate assembly of the platform of the 30S subunit. This chain is Small ribosomal subunit protein uS8, found in Helicobacter pylori (strain P12).